Consider the following 213-residue polypeptide: Adenylate kinase (213 aa).

Residue 10 to 15 participates in ATP binding; that stretch reads GAGKGT. The tract at residues 30-59 is NMP; sequence STGDMFRAAMANQTEMGVLAKSYIDKGDLV. Residues threonine 31, arginine 36, 57-59, 86-89, and glutamine 93 each bind AMP; these read DLV and GYPR. An LID region spans residues 127–160; that stretch reads GRIINKKTGETFHKIFNPPVGDYKEEDFYQREDD. ATP contacts are provided by residues arginine 128 and 137 to 138; that span reads TF. Residues arginine 157 and arginine 168 each contribute to the AMP site. ATP is bound at residue lysine 196.

The protein belongs to the adenylate kinase family. As to quaternary structure, monomer.

It localises to the cytoplasm. It carries out the reaction AMP + ATP = 2 ADP. It participates in purine metabolism; AMP biosynthesis via salvage pathway; AMP from ADP: step 1/1. Functionally, catalyzes the reversible transfer of the terminal phosphate group between ATP and AMP. Plays an important role in cellular energy homeostasis and in adenine nucleotide metabolism. The sequence is that of Adenylate kinase from Streptococcus equi subsp. equi (strain 4047).